A 385-amino-acid chain; its full sequence is Putative glutamate--cysteine ligase 2 (385 aa).

This sequence belongs to the glutamate--cysteine ligase type 2 family. YbdK subfamily.

It carries out the reaction L-cysteine + L-glutamate + ATP = gamma-L-glutamyl-L-cysteine + ADP + phosphate + H(+). ATP-dependent carboxylate-amine ligase which exhibits weak glutamate--cysteine ligase activity. This is Putative glutamate--cysteine ligase 2 from Solibacter usitatus (strain Ellin6076).